The following is a 356-amino-acid chain: S-adenosylmethionine:tRNA ribosyltransferase-isomerase (356 aa).

The protein belongs to the QueA family. Monomer.

The protein resides in the cytoplasm. It carries out the reaction 7-aminomethyl-7-carbaguanosine(34) in tRNA + S-adenosyl-L-methionine = epoxyqueuosine(34) in tRNA + adenine + L-methionine + 2 H(+). It participates in tRNA modification; tRNA-queuosine biosynthesis. Functionally, transfers and isomerizes the ribose moiety from AdoMet to the 7-aminomethyl group of 7-deazaguanine (preQ1-tRNA) to give epoxyqueuosine (oQ-tRNA). The polypeptide is S-adenosylmethionine:tRNA ribosyltransferase-isomerase (Xanthomonas oryzae pv. oryzae (strain KACC10331 / KXO85)).